An 82-amino-acid chain; its full sequence is ATP synthase subunit c, chloroplastic (82 aa).

The next 2 membrane-spanning stretches (helical) occupy residues 7 to 27 (GASV…PGIG) and 57 to 77 (LAFM…LLFA).

Belongs to the ATPase C chain family. F-type ATPases have 2 components, F(1) - the catalytic core - and F(0) - the membrane proton channel. F(1) has five subunits: alpha(3), beta(3), gamma(1), delta(1), epsilon(1). F(0) has four main subunits: a(1), b(1), b'(1) and c(10-14). The alpha and beta chains form an alternating ring which encloses part of the gamma chain. F(1) is attached to F(0) by a central stalk formed by the gamma and epsilon chains, while a peripheral stalk is formed by the delta, b and b' chains.

The protein resides in the plastid. The protein localises to the chloroplast thylakoid membrane. F(1)F(0) ATP synthase produces ATP from ADP in the presence of a proton or sodium gradient. F-type ATPases consist of two structural domains, F(1) containing the extramembraneous catalytic core and F(0) containing the membrane proton channel, linked together by a central stalk and a peripheral stalk. During catalysis, ATP synthesis in the catalytic domain of F(1) is coupled via a rotary mechanism of the central stalk subunits to proton translocation. Its function is as follows. Key component of the F(0) channel; it plays a direct role in translocation across the membrane. A homomeric c-ring of between 10-14 subunits forms the central stalk rotor element with the F(1) delta and epsilon subunits. In Emiliania huxleyi (Coccolithophore), this protein is ATP synthase subunit c, chloroplastic.